The chain runs to 571 residues: Proline--tRNA ligase (571 aa).

The protein belongs to the class-II aminoacyl-tRNA synthetase family. ProS type 1 subfamily. Homodimer.

It is found in the cytoplasm. It carries out the reaction tRNA(Pro) + L-proline + ATP = L-prolyl-tRNA(Pro) + AMP + diphosphate. Catalyzes the attachment of proline to tRNA(Pro) in a two-step reaction: proline is first activated by ATP to form Pro-AMP and then transferred to the acceptor end of tRNA(Pro). As ProRS can inadvertently accommodate and process non-cognate amino acids such as alanine and cysteine, to avoid such errors it has two additional distinct editing activities against alanine. One activity is designated as 'pretransfer' editing and involves the tRNA(Pro)-independent hydrolysis of activated Ala-AMP. The other activity is designated 'posttransfer' editing and involves deacylation of mischarged Ala-tRNA(Pro). The misacylated Cys-tRNA(Pro) is not edited by ProRS. This chain is Proline--tRNA ligase, found in Pseudomonas paraeruginosa (strain DSM 24068 / PA7) (Pseudomonas aeruginosa (strain PA7)).